The following is a 290-amino-acid chain: Sodium/potassium-transporting ATPase subunit beta-2 (290 aa).

Over 1–39 (MVIQKEKKSCGQVVEEWKEFVWNPRTHQFMGRTGTSWAF) the chain is Cytoplasmic. Residues 40–67 (ILLFYLVFYGFLTAMFTLTMWVMLQTVS) traverse the membrane as a helical; Signal-anchor for type II membrane protein segment. The Extracellular portion of the chain corresponds to 68-290 (EHTPKYQDRL…VAFKLRINKT (223 aa)). Asparagine 96 and asparagine 118 each carry an N-linked (GlcNAc...) asparagine glycan. An intrachain disulfide couples cysteine 129 to cysteine 150. Asparagine 153 and asparagine 159 each carry an N-linked (GlcNAc...) asparagine glycan. A disulfide bridge connects residues cysteine 160 and cysteine 177. Asparagine 193, asparagine 197, and asparagine 238 each carry an N-linked (GlcNAc...) asparagine glycan. An immunoglobulin-like region spans residues 193–290 (NQSMNVTCAG…VAFKLRINKT (98 aa)). A disulfide bridge links cysteine 200 with cysteine 261.

Belongs to the X(+)/potassium ATPases subunit beta family. The sodium/potassium-transporting ATPase is composed of a catalytic alpha subunit, an auxiliary non-catalytic beta subunit and an additional regulatory subunit. Interacts with BSG.

The protein localises to the cell membrane. In terms of biological role, this is the non-catalytic component of the active enzyme, which catalyzes the hydrolysis of ATP coupled with the exchange of Na(+) and K(+) ions across the plasma membrane. The exact function of the beta-2 subunit is not known. Functionally, mediates cell adhesion of neurons and astrocytes, and promotes neurite outgrowth. This Oryctolagus cuniculus (Rabbit) protein is Sodium/potassium-transporting ATPase subunit beta-2 (ATP1B2).